The chain runs to 1298 residues: Phosphoribosylformylglycinamidine synthase (1298 aa).

The tract at residues 301 to 328 (APFPGASTGSGGEIRDEGATGRGAKPKA) is disordered. Residues 305-316 (GASTGSGGEIRD), 384-386 (TGY), and alanine 676 contribute to the ATP site. Residues aspartate 677, glutamate 716, asparagine 720, and aspartate 884 each coordinate Mg(2+). Residue serine 886 coordinates ATP. Residues 1045-1298 (VAVLREQGVN…MFRNARVWVN (254 aa)) enclose the Glutamine amidotransferase type-1 domain. Cysteine 1138 serves as the catalytic Nucleophile. Active-site residues include histidine 1263 and glutamate 1265.

This sequence in the N-terminal section; belongs to the FGAMS family. Monomer.

Its subcellular location is the cytoplasm. The enzyme catalyses N(2)-formyl-N(1)-(5-phospho-beta-D-ribosyl)glycinamide + L-glutamine + ATP + H2O = 2-formamido-N(1)-(5-O-phospho-beta-D-ribosyl)acetamidine + L-glutamate + ADP + phosphate + H(+). The protein operates within purine metabolism; IMP biosynthesis via de novo pathway; 5-amino-1-(5-phospho-D-ribosyl)imidazole from N(2)-formyl-N(1)-(5-phospho-D-ribosyl)glycinamide: step 1/2. Functionally, phosphoribosylformylglycinamidine synthase involved in the purines biosynthetic pathway. Catalyzes the ATP-dependent conversion of formylglycinamide ribonucleotide (FGAR) and glutamine to yield formylglycinamidine ribonucleotide (FGAM) and glutamate. This is Phosphoribosylformylglycinamidine synthase from Pseudomonas fluorescens (strain Pf0-1).